A 384-amino-acid polypeptide reads, in one-letter code: Glycerol 3-phosphate oxidase (384 aa).

The first 15 residues, 1–15, serve as a signal peptide directing secretion; sequence METRDVLIVGGGVIG. Residue I14 coordinates FAD. C16 carries N-palmitoyl cysteine lipidation. C16 is lipidated: S-diacylglycerol cysteine. Residues E33, 42–43, and 47–49 contribute to the FAD site; these read TS and SGV. Residues S47 and H51 each contribute to the sn-glycerol 3-phosphate site. Residue H51 is the Proton acceptor of the active site. Residue V177 participates in FAD binding. Sn-glycerol 3-phosphate contacts are provided by K258 and R320. 346-347 provides a ligand contact to FAD; sequence MK. S348 is a binding site for sn-glycerol 3-phosphate. T352 contributes to the FAD binding site.

In terms of assembly, monomer. Requires FAD as cofactor.

It is found in the cytoplasm. The protein resides in the cell membrane. It catalyses the reaction sn-glycerol 3-phosphate + O2 = dihydroxyacetone phosphate + H2O2. Its pathway is polyol metabolism; glycerol degradation via glycerol kinase pathway; glycerone phosphate from sn-glycerol 3-phosphate (aerobic route): step 1/1. Its function is as follows. Catalyzes the oxidation of glycerol 3-phosphate to dihydroxyacetone phosphate (DHAP), with a reduction of O2 to H2O2. The formation of hydrogen peroxide by this enzyme is crucial for cytotoxic effects of M.pneumoniae on host cells. Is involved in the metabolism of glycerol and is essential for glycerol utilization; glycerol is one of the few carbon sources that can be utilized by M.pneumoniae for growth. To a lesser extent, is also able to use glyceraldehyde 3-phosphate (GAP), an intermediate in the glycolysis pathway, as a substrate (but the structure of the product has not been elucidated). Therefore, in the absence of glycerol, GAP may serve as a substrate in the GlpO reaction to supply H2O2 during mycoplasma infection. Does not show any dehydrogenase activity with NAD(+). This Mycoplasma pneumoniae (strain ATCC 29342 / M129 / Subtype 1) (Mycoplasmoides pneumoniae) protein is Glycerol 3-phosphate oxidase.